The sequence spans 282 residues: NADPH-dependent 7-cyano-7-deazaguanine reductase (282 aa).

88-90 is a binding site for substrate; the sequence is IES. 90 to 91 contacts NADPH; sequence SK. The active-site Thioimide intermediate is the Cys-190. The active-site Proton donor is the Asp-197. Residue 229-230 coordinates substrate; that stretch reads HE. 258–259 is a binding site for NADPH; the sequence is RG.

Belongs to the GTP cyclohydrolase I family. QueF type 2 subfamily. Homodimer.

It localises to the cytoplasm. The enzyme catalyses 7-aminomethyl-7-carbaguanine + 2 NADP(+) = 7-cyano-7-deazaguanine + 2 NADPH + 3 H(+). Its pathway is tRNA modification; tRNA-queuosine biosynthesis. In terms of biological role, catalyzes the NADPH-dependent reduction of 7-cyano-7-deazaguanine (preQ0) to 7-aminomethyl-7-deazaguanine (preQ1). This Escherichia coli O45:K1 (strain S88 / ExPEC) protein is NADPH-dependent 7-cyano-7-deazaguanine reductase.